Consider the following 3141-residue polypeptide: Genome polyprotein (3141 aa).

The Peptidase S30 domain occupies 165 to 308 (RMSEASLQLF…KKQSNEIIHY (144 aa)). Active-site for P1 proteinase activity residues include His216, Asp225, and Ser259. The short motif at 360–363 (KITC) is the Involved in interaction with stylet and aphid transmission element. The Involved in virions binding and aphid transmission signature appears at 619 to 621 (PTK). In terms of domain architecture, Peptidase C6 spans 645–767 (MFIAKAGYCY…DSNMKTYLVG (123 aa)). Residues Cys653 and His726 each act as for helper component proteinase activity in the active site. Positions 1241-1393 (EVMHGSHQDI…TQKEVKVIVE (153 aa)) constitute a Helicase ATP-binding domain. 1254-1261 (GAVGSGKS) contacts ATP. A DECH box motif is present at residues 1343–1346 (DECH). The Helicase C-terminal domain occupies 1412 to 1571 (DILKHGVNVL…GLPVMTNGVS (160 aa)). Residues 1898–1905 (KKGKSKGK) carry the Nuclear localization signal motif. An O-(5'-phospho-RNA)-tyrosine modification is found at Tyr1920. Residues 2051–2269 (SKSLFRGLRD…VCWGSLQLKR (219 aa)) enclose the Peptidase C4 domain. Catalysis depends on for nuclear inclusion protein A activity residues His2096, Asp2131, and Cys2201. Positions 2535–2659 (WIYCDADGSQ…AVHPAYESIY (125 aa)) constitute a RdRp catalytic domain. Ser2836, Ser2892, Ser2912, and Ser2929 each carry phosphoserine. Residues Thr3065 and Thr3124 each carry the phosphothreonine modification.

It belongs to the potyviridae genome polyprotein family. As to quaternary structure, interacts with host eIF4E protein (via cap-binding region); this interaction mediates the translation of the VPg-viral RNA conjugates. Part of a complex that comprises VPg, RNA, host EIF4E and EIF4G; this interaction mediates the translation of the VPg-viral RNA conjugates. Interacts with host eIF(iso)4E both in host nucleus and cytoplasm. VPg is uridylylated by the polymerase and is covalently attached to the 5'-end of the genomic RNA. This uridylylated form acts as a nucleotide-peptide primer for the polymerase. In terms of processing, potyviral RNA is expressed as two polyproteins which undergo post-translational proteolytic processing. Genome polyprotein is processed by NIa-pro, P1 and HC-pro proteinases resulting in the production of at least ten individual proteins. P3N-PIPO polyprotein is cleaved by P1 and HC-pro proteinases resulting in the production of three individual proteins. The P1 proteinase and the HC-pro cleave only their respective C-termini autocatalytically. 6K1 is essential for proper proteolytic separation of P3 from CI.

The protein localises to the host cytoplasmic vesicle. The protein resides in the host nucleus. It is found in the host cytoplasm. It localises to the virion. It carries out the reaction RNA(n) + a ribonucleoside 5'-triphosphate = RNA(n+1) + diphosphate. The enzyme catalyses Hydrolyzes glutaminyl bonds, and activity is further restricted by preferences for the amino acids in P6 - P1' that vary with the species of potyvirus, e.g. Glu-Xaa-Xaa-Tyr-Xaa-Gln-|-(Ser or Gly) for the enzyme from tobacco etch virus. The natural substrate is the viral polyprotein, but other proteins and oligopeptides containing the appropriate consensus sequence are also cleaved.. The catalysed reaction is Hydrolyzes a Gly-|-Gly bond at its own C-terminus, commonly in the sequence -Tyr-Xaa-Val-Gly-|-Gly, in the processing of the potyviral polyprotein.. Its function is as follows. Required for aphid transmission and also has proteolytic activity. Only cleaves a Gly-Gly dipeptide at its own C-terminus. Interacts with virions and aphid stylets. Acts as a suppressor of RNA-mediated gene silencing, also known as post-transcriptional gene silencing (PTGS), a mechanism of plant viral defense that limits the accumulation of viral RNAs. May have RNA-binding activity. Has helicase activity. It may be involved in replication. Functionally, indispensable for virus replication. Reduces the abundance of host transcripts related to jasmonic acid biosynthesis therefore altering the host defenses. In order to increase its own stability, decreases host protein degradation pathways. In terms of biological role, indispensable for virus replication. Its function is as follows. Mediates the cap-independent, EIF4E-dependent translation of viral genomic RNAs. Binds to the cap-binding site of host EIF4E and thus interferes with the host EIF4E-dependent mRNA export and translation. VPg-RNA directly binds EIF4E and is a template for transcription. Also forms trimeric complexes with EIF4E-EIF4G, which are templates for translation. Has RNA-binding and proteolytic activities. Functionally, an RNA-dependent RNA polymerase that plays an essential role in the virus replication. In terms of biological role, involved in aphid transmission, cell-to-cell and systemis movement, encapsidation of the viral RNA and in the regulation of viral RNA amplification. The polypeptide is Genome polyprotein (Plum pox potyvirus (strain D) (PPV)).